A 494-amino-acid polypeptide reads, in one-letter code: Glutamate--tRNA ligase (494 aa).

A 'HIGH' region motif is present at residues 9 to 19; the sequence is PSPTGDPHLGT. The 'KMSKS' region signature appears at 250–254; it reads KLSKR. An ATP-binding site is contributed by Lys253.

The protein belongs to the class-I aminoacyl-tRNA synthetase family. Glutamate--tRNA ligase type 1 subfamily. Monomer.

The protein localises to the cytoplasm. The enzyme catalyses tRNA(Glu) + L-glutamate + ATP = L-glutamyl-tRNA(Glu) + AMP + diphosphate. Functionally, catalyzes the attachment of glutamate to tRNA(Glu) in a two-step reaction: glutamate is first activated by ATP to form Glu-AMP and then transferred to the acceptor end of tRNA(Glu). This Pseudoalteromonas translucida (strain TAC 125) protein is Glutamate--tRNA ligase.